The primary structure comprises 515 residues: 4-hydroxybenzoate brominase (decarboxylating) (515 aa).

The FAD site is built by Ser-13, Glu-32, Val-40, Phe-41, His-51, Val-102, and Gln-364.

This sequence belongs to the FMO family. FAD serves as cofactor.

The enzyme catalyses 2 bromide + 4-hydroxybenzoate + 2 NADPH + 2 O2 + 5 H(+) = 2,4-dibromophenol + CO2 + 2 NADP(+) + 4 H2O. It catalyses the reaction bromide + 4-hydroxybenzoate + NADPH + O2 + 2 H(+) = 3-bromo-4-hydroxybenzoate + NADP(+) + 2 H2O. The catalysed reaction is 3-bromo-4-hydroxybenzoate + bromide + NADPH + O2 + 3 H(+) = 2,4-dibromophenol + CO2 + NADP(+) + 2 H2O. It carries out the reaction 3,4-dihydroxybenzoate + 2 bromide + 2 NADPH + 2 O2 + 5 H(+) = 3,5-dibromobenzene-1,2-diol + CO2 + 2 NADP(+) + 4 H2O. The enzyme catalyses 3,4-dihydroxybenzoate + bromide + NADPH + O2 + 2 H(+) = 3-bromo-4,5-dihydroxybenzoate + NADP(+) + 2 H2O. It catalyses the reaction 3-bromo-4,5-dihydroxybenzoate + bromide + NADPH + O2 + 3 H(+) = 3,5-dibromobenzene-1,2-diol + CO2 + NADP(+) + 2 H2O. With respect to regulation, activity is abolished in the absence of either bromide or NADPH, while a partial reduction in activity is observed upon omission of FAD. Activity does not require the addition of a flavin reductase to regenerate FADH(2) in situ. Functionally, brominase involved in the biosynthesis of polybrominated aromatic organic compounds. Catalyzes the bromination of 4-hydroxybenzoate (4-HBA) to 3-bromo-4-hydroxybenzoate, followed by bromination and decarboxylation of 3-bromo-4-hydroxybenzoate to 2,4-dibromophenol. Can also use 3,4-dihydroxybenzoate, with lower efficiency, forming 3-bromo-4,5-dihydroxybenzoate and 3,5-dibromobenzene-1,2-diol. Can utilize iodide in vivo leading to the formation of iodophenols, but cannot use chloride. The chain is 4-hydroxybenzoate brominase (decarboxylating) from Pseudoalteromonas luteoviolacea (strain 2ta16).